Consider the following 219-residue polypeptide: Multiple organellar RNA editing factor 2, chloroplastic (219 aa).

A chloroplast-targeting transit peptide spans 1–48 (MALPLSGTRHLTRALLSNVTLMAPPRIPSSVHYGGSRLGCSTRFFSIR). The interval 182–219 (VQRSPERQRRVEPQPQRAQDRPRYNDRTRYSRRRENTR) is disordered. The segment covering 185-219 (SPERQRRVEPQPQRAQDRPRYNDRTRYSRRRENTR) has biased composition (basic and acidic residues).

This sequence belongs to the MORF family. As to quaternary structure, homodimer and heterodimer with MORF9. Interacts with protoporphyrinogen oxidase 1 PPOX1. Heterodimers with MORF8/RIP1 and MORF9/RIP9. Interacts with PCMP-A2/PMD1. Interacts with ORRM1. Interacts with ORRM6.

Its subcellular location is the plastid. It is found in the chloroplast. Involved in plastid rRNA processing and consequently in translation and early chloroplast differentiation. Involved in organellar RNA editing. Required for the processing of multiple editing sites in plastids. The chain is Multiple organellar RNA editing factor 2, chloroplastic from Arabidopsis thaliana (Mouse-ear cress).